A 1559-amino-acid polypeptide reads, in one-letter code: Fatty acid synthase alpha subunit stcJ (1559 aa).

Residues 68–147 enclose the Carrier domain; it reads DTPLTAIFII…AALGEVSLGP (80 aa). O-(pantetheine 4'-phosphoryl)serine is present on Ser106. The tract at residues 457–693 is ketoreductase (KR) domain; the sequence is NHTYLITGAG…SLLLTPQLAT (237 aa). The 455-residue stretch at 873-1327 folds into the Ketosynthase family 3 (KS3) domain; the sequence is REVFQEIVLE…QKEAQLVGVH (455 aa). The active-site For beta-ketoacyl synthase activity is Cys1058. The segment covering 1105–1117 has biased composition (basic and acidic residues); sequence VRDEQARGREPGE. The tract at residues 1105–1125 is disordered; sequence VRDEQARGREPGEMSRPTAAS. Catalysis depends on for beta-ketoacyl synthase activity residues His1212 and His1253. Asp1432 serves as a coordination point for Mg(2+). Acetyl-CoA-binding positions include 1432-1434, 1480-1490, 1504-1506, and 1532-1534; these read DTV, EAVFKCLQTVS, RVQ, and LSY. Ser1533 contacts Mg(2+).

The protein belongs to the thiolase-like superfamily. Fungal fatty acid synthetase subunit alpha family. As to quaternary structure, [Alpha(6)beta(6)] hexamers of two multifunctional subunits (alpha and beta).

It carries out the reaction acetyl-CoA + n malonyl-CoA + 2n NADPH + 4n H(+) = a long-chain-acyl-CoA + n CoA + n CO2 + 2n NADP(+).. The catalysed reaction is a fatty acyl-[ACP] + malonyl-[ACP] + H(+) = a 3-oxoacyl-[ACP] + holo-[ACP] + CO2. It catalyses the reaction a (3R)-hydroxyacyl-[ACP] + NADP(+) = a 3-oxoacyl-[ACP] + NADPH + H(+). It functions in the pathway mycotoxin biosynthesis; sterigmatocystin biosynthesis. In terms of biological role, fatty acid synthase alpha subunit; part of the gene cluster that mediates the biosynthesis of sterigmatocystin (ST), a polyketide-derived furanocoumarin which is part of the most toxic and carcinogenic compounds among the known mycotoxins. The first step in the biosynthesis of sterigmatocystin is the production of hexanoate by the fatty acid synthase (FAS) units stcJ and stcK. The polyketide backbone is assembled by the non-reducing polyketide synthase stcA by condensation of the starter hexanoyl-CoA and 7 malonyl-CoA extender units followed by cyclization and release of norsolorinic acid. Norsolorinic acid is the first stable intermediate in the biosynthesis of sterigmatocystin and is converted into averantin (AVN) by the ketoreductase stcE which reduces the hexanoate ketone to an alcohol. Averantin is then oxidized into 5'-hydroxyaverantin (HAVN) by the cytochrome P450 monooxygenase stcF. 5'-hydroxyaverantin is further converted to 5'-oxyaverantin (OAVN) by the 5'-hydroxyaverantin dehydrogenase stcG. The next step is the conversion of OAVN into averufin (AVF) which is catalyzed by a yet to be identified enzyme. The cytochrome P450 monooxygenase stcB and the flavin-binding monooxygenase stcW are both required for the conversion of averufin to 1-hydroxyversicolorone. The esterase stcI probably catalyzes the formation of versiconal hemiacetal acetate from 1-hydroxyversicolorone. The oxydoreductase stcN then probably catalyzes the biosynthetic step from versiconal to versicolorin B (VERB). The next step is performed by the versicolorin B desaturase stcL to produce versicolorin A (VERA). The ketoreductase stcU and the cytochrome P450 monooxygenase stcS are involved in the conversion of versicolorin A to demethylsterigmatocystin. The Baeyer-Villiger oxidas stcQ and the reductase stcR might be involved in the biosynthetic step from versicolorin A to demethylsterigmatocystin. The final step in the biosynthesis of sterigmatocystin is the methylation of demethylsterigmatocystin catalyzed by the methyltransferase stcP. This chain is Fatty acid synthase alpha subunit stcJ, found in Emericella nidulans (strain FGSC A4 / ATCC 38163 / CBS 112.46 / NRRL 194 / M139) (Aspergillus nidulans).